Here is a 376-residue protein sequence, read N- to C-terminus: Zinc-regulated transporter 1 (376 aa).

The Extracellular portion of the chain corresponds to 1–50 (MSNVTTPWWKQWDPSEVTLADKTPDDVWKTCVLQGVYFGGNEYNGNLGAR). The helical transmembrane segment at 51–71 (ISSVFVILFVSTFFTMFPLIS) threads the bilayer. Residues 72–80 (TKVKRLRIP) lie on the Cytoplasmic side of the membrane. Residues 81–101 (LYVYLFAKYFGSGVIVATAFI) traverse the membrane as a helical segment. Over 102-122 (HLMDPAYGAIGGTTCVGQTGN) the chain is Extracellular. Residues 123–143 (WGLYSWCPAIMLTSLTFTFLT) form a helical membrane-spanning segment. Residues 144 to 216 (DLFSSVWVER…TSMDVVQSFQ (73 aa)) are Cytoplasmic-facing. Polar residues predominate over residues 177–191 (VSSENDNENGTANGS). The tract at residues 177 to 196 (VSSENDNENGTANGSHDTKN) is disordered. Residues 217 to 237 (AQFYAFLILEFGVIFHSVMIG) traverse the membrane as a helical segment. Over 238 to 242 (LNLGS) the chain is Extracellular. A helical membrane pass occupies residues 243-263 (VGDEFSSLYPVLVFHQSFEGL). Residues 264–278 (GIGARLSAIEFPRSK) are Cytoplasmic-facing. A helical membrane pass occupies residues 279–299 (RWWPWALCVAYGLTTPICVAI). At 300–310 (GLGVRTRYVSG) the chain is on the extracellular side. The helical transmembrane segment at 311–331 (SYTALVISGVLDAISAGILLY) threads the bilayer. Residues 332–354 (TGLVELLARDFIFNPQRTKDLRE) are Cytoplasmic-facing. The helical transmembrane segment at 355 to 375 (LSFNVICTLFGAGIMALIGKW) threads the bilayer. Residue A376 is a topological domain, extracellular.

It belongs to the ZIP transporter (TC 2.A.5) family.

The protein resides in the membrane. In terms of biological role, high-affinity zinc transport protein. The sequence is that of Zinc-regulated transporter 1 (ZRT1) from Saccharomyces cerevisiae (strain ATCC 204508 / S288c) (Baker's yeast).